A 255-amino-acid polypeptide reads, in one-letter code: Alpha-acetolactate decarboxylase (255 aa).

Belongs to the alpha-acetolactate decarboxylase family.

The enzyme catalyses (2S)-2-acetolactate + H(+) = (R)-acetoin + CO2. It participates in polyol metabolism; (R,R)-butane-2,3-diol biosynthesis; (R,R)-butane-2,3-diol from pyruvate: step 2/3. Its function is as follows. Converts acetolactate into acetoin, which can be excreted by the cells. This may be a mechanism for controlling the internal pH of cells in the stationary stage. This is Alpha-acetolactate decarboxylase (alsD) from Bacillus subtilis (strain 168).